Reading from the N-terminus, the 447-residue chain is Serine--tRNA ligase (447 aa).

L-serine is bound at residue 245 to 247 (TAE). ATP-binding positions include 276–278 (RKE) and Val292. Glu299 lines the L-serine pocket. 363–366 (ELAS) is an ATP binding site. Position 398 (Thr398) interacts with L-serine.

Belongs to the class-II aminoacyl-tRNA synthetase family. Type-1 seryl-tRNA synthetase subfamily. In terms of assembly, homodimer. The tRNA molecule binds across the dimer.

It localises to the cytoplasm. It catalyses the reaction tRNA(Ser) + L-serine + ATP = L-seryl-tRNA(Ser) + AMP + diphosphate + H(+). The enzyme catalyses tRNA(Sec) + L-serine + ATP = L-seryl-tRNA(Sec) + AMP + diphosphate + H(+). It participates in aminoacyl-tRNA biosynthesis; selenocysteinyl-tRNA(Sec) biosynthesis; L-seryl-tRNA(Sec) from L-serine and tRNA(Sec): step 1/1. Functionally, catalyzes the attachment of serine to tRNA(Ser). Is also able to aminoacylate tRNA(Sec) with serine, to form the misacylated tRNA L-seryl-tRNA(Sec), which will be further converted into selenocysteinyl-tRNA(Sec). This Pyrobaculum neutrophilum (strain DSM 2338 / JCM 9278 / NBRC 100436 / V24Sta) (Thermoproteus neutrophilus) protein is Serine--tRNA ligase.